A 250-amino-acid polypeptide reads, in one-letter code: Probable dihydroorotate dehydrogenase B (NAD(+)), electron transfer subunit (250 aa).

One can recognise an FAD-binding FR-type domain in the interval 1-89; sequence MINLKIEENV…RGPYGNGFDV (89 aa). [2Fe-2S] cluster-binding residues include Cys-200, Cys-205, Cys-208, and Cys-216.

This sequence belongs to the PyrK family. Heterotetramer of 2 PyrK and 2 PyrD type B subunits. It depends on [2Fe-2S] cluster as a cofactor. The cofactor is FAD.

It functions in the pathway pyrimidine metabolism; UMP biosynthesis via de novo pathway; orotate from (S)-dihydroorotate (NAD(+) route): step 1/1. Functionally, responsible for channeling the electrons from the oxidation of dihydroorotate from the FMN redox center in the PyrD type B subunit to the ultimate electron acceptor NAD(+). This is Probable dihydroorotate dehydrogenase B (NAD(+)), electron transfer subunit from Thermoplasma volcanium (strain ATCC 51530 / DSM 4299 / JCM 9571 / NBRC 15438 / GSS1).